Consider the following 234-residue polypeptide: Eukaryotic translation initiation factor 3 subunit K (234 aa).

The PCI domain maps to 46 to 219 (SDIEANLALL…EAKPATTTES (174 aa)).

This sequence belongs to the eIF-3 subunit K family. As to quaternary structure, component of the eukaryotic translation initiation factor 3 (eIF-3) complex.

The protein resides in the cytoplasm. Functionally, component of the eukaryotic translation initiation factor 3 (eIF-3) complex, which is involved in protein synthesis of a specialized repertoire of mRNAs and, together with other initiation factors, stimulates binding of mRNA and methionyl-tRNAi to the 40S ribosome. The eIF-3 complex specifically targets and initiates translation of a subset of mRNAs involved in cell proliferation. In Yarrowia lipolytica (strain CLIB 122 / E 150) (Yeast), this protein is Eukaryotic translation initiation factor 3 subunit K.